We begin with the raw amino-acid sequence, 135 residues long: Small ribosomal subunit protein bS16 (135 aa).

A disordered region spans residues 94–135; sequence IGTEMETWQQRNDSRLKRGLDRKAIRRKRKKEAEAKEKESAG. Basic and acidic residues-rich tracts occupy residues 105 to 116 and 124 to 135; these read NDSRLKRGLDRK and KEAEAKEKESAG.

Belongs to the bacterial ribosomal protein bS16 family.

The sequence is that of Small ribosomal subunit protein bS16 from Chloroherpeton thalassium (strain ATCC 35110 / GB-78).